The sequence spans 568 residues: Vacuolar protein 8 (568 aa).

Gly2 carries the N-myristoyl glycine lipid modification. Residues Cys4, Cys5, and Cys7 are each lipidated (S-palmitoyl cysteine). ARM repeat units lie at residues 37–74 (DKDNYDFYSGGPLKALTTLVYSDNLNLQRSAALAFAEI), 75–114 (TEKYVRPVDREVLEPILILLQSHDPQIQIAACAALGNLAV), 116–155 (NENKILIVEMGGLEPLIEQMKSNNVEVQCNAVGCITNLAT), 157–196 (DDNKAKIAHSGALVPLTKLAKSKNIRVQRNATGALLNMTH), 198–237 (GENRKELVDAGAVPVLVSLLSSSDADVQYYCTTALSNIAV), 241–280 (NRRKLSQTEPRLVSKLVVLTDSPSARVKCQATLALRNLAS), 282–321 (TGYQLEIVRAGGLSHLVKLIQCNSMPLVLASVACIRNISI), 323–363 (PLNE…NLAA), and 407–446 (DNSKLELLDANILEALIPMTFSTNQEVAGNAAAALANLCS).

This sequence belongs to the beta-catenin family.

It localises to the vacuole membrane. Its function is as follows. Functions in both vacuole inheritance and protein targeting from the cytoplasm to vacuole. In Eremothecium gossypii (strain ATCC 10895 / CBS 109.51 / FGSC 9923 / NRRL Y-1056) (Yeast), this protein is Vacuolar protein 8 (VAC8).